A 103-amino-acid chain; its full sequence is Large ribosomal subunit protein bL21 (103 aa).

The protein belongs to the bacterial ribosomal protein bL21 family. In terms of assembly, part of the 50S ribosomal subunit. Contacts protein L20.

Functionally, this protein binds to 23S rRNA in the presence of protein L20. This Cupriavidus metallidurans (strain ATCC 43123 / DSM 2839 / NBRC 102507 / CH34) (Ralstonia metallidurans) protein is Large ribosomal subunit protein bL21.